A 364-amino-acid chain; its full sequence is Aminomethyltransferase (364 aa).

It belongs to the GcvT family. The glycine cleavage system is composed of four proteins: P, T, L and H.

The enzyme catalyses N(6)-[(R)-S(8)-aminomethyldihydrolipoyl]-L-lysyl-[protein] + (6S)-5,6,7,8-tetrahydrofolate = N(6)-[(R)-dihydrolipoyl]-L-lysyl-[protein] + (6R)-5,10-methylene-5,6,7,8-tetrahydrofolate + NH4(+). Its function is as follows. The glycine cleavage system catalyzes the degradation of glycine. The chain is Aminomethyltransferase from Geobacillus kaustophilus (strain HTA426).